A 501-amino-acid polypeptide reads, in one-letter code: Cytochrome P450 monooxygenase ccsG (501 aa).

A signal peptide spans M1–T28. N-linked (GlcNAc...) asparagine glycosylation is found at N115 and N154. C443 contacts heme.

This sequence belongs to the cytochrome P450 family. The cofactor is heme.

Its pathway is mycotoxin biosynthesis. Cytochrome P450 monooxygenase; part of the gene cluster that mediates the biosynthesis of a family of the mycotoxins cytochalasins E and K. The hybrid PKS-NRPS synthetase ccsA and the enoyl reductase ccsC are responsible for fusion of phenylalanine with an octaketide backbone and subsequent release of the stable tetramic acid precursor. The polyketide synthase module (PKS) of the PKS-NRPS ccsA is responsible for the synthesis of the octaketide backbone. The downstream nonribosomal peptide synthetase (NRPS) amidates the carboxyl end of the octaketide with a phenylalanine. A reductase-like domain (R) at the C-terminus catalyzes the reductive release of the polyketide-amino acid intermediate. Because ccsA lacks a designated enoylreductase (ER) domain, the required activity is provided the enoyl reductase ccsC. Upon formation of the 11-membered carbocycle-fused perhydroisoindolone intermediate, a number of oxidative steps are required to afford the final cytochalasin E and K, including two hydroxylations at C17 and C18, one alcohol oxidation at C17, one epoxidation at C6 and C7 and two Baeyer-Villiger oxidations. The oxidative modification at C17, C18 and the C6-C7 epoxidation are likely to be catalyzed by the two cytochrome P450 oxygenases ccsD and ccsG. CcsD may be responsible for the epoxidation of the C6-C7 double bond. CcsG may be responsible for the successive oxidative modifications at C17 and C18. The double Baeyer-Villiger oxidations of ketocytochalasin to precytochalasin and cytochalasin Z(16) are among the final steps leading to cytochalasin E and K and are catalyzed by ccsB. The first oxygen insertion step follows that of the classic BVMO mechanism, generating the ester precytochalasin. Release of precytochalasin into an aqueous environment can generate the shunt product iso-precytochalasin through spontaneous isomerization. Alternatively, precytochalasin can undergo further oxidation by ccsB to yield the in-line carbonate-containing cytochalasin Z(16). Cytochalasin Z(16) is a precursor to cytochalasin E and cytochalasin K, whereas iso-precytochalasin is a precursor to cytochalasin Z(17) and rosellichalasin. The hydrolyase ccsE may catalyze hydrolysis of epoxide bond in cytochalasin E to afford cytochalasin K. The function of ccsF has not been assigned but it may play a role in post-PKS-NRPS biosynthetic step, resistance or transport of cytochalasins and related PKS-NRPS products. This chain is Cytochrome P450 monooxygenase ccsG, found in Aspergillus clavatus (strain ATCC 1007 / CBS 513.65 / DSM 816 / NCTC 3887 / NRRL 1 / QM 1276 / 107).